We begin with the raw amino-acid sequence, 466 residues long: 3-isopropylmalate dehydratase large subunit (466 aa).

[4Fe-4S] cluster-binding residues include Cys347, Cys407, and Cys410.

Belongs to the aconitase/IPM isomerase family. LeuC type 1 subfamily. As to quaternary structure, heterodimer of LeuC and LeuD. Requires [4Fe-4S] cluster as cofactor.

The enzyme catalyses (2R,3S)-3-isopropylmalate = (2S)-2-isopropylmalate. It participates in amino-acid biosynthesis; L-leucine biosynthesis; L-leucine from 3-methyl-2-oxobutanoate: step 2/4. Functionally, catalyzes the isomerization between 2-isopropylmalate and 3-isopropylmalate, via the formation of 2-isopropylmaleate. This chain is 3-isopropylmalate dehydratase large subunit, found in Escherichia coli O17:K52:H18 (strain UMN026 / ExPEC).